Here is a 260-residue protein sequence, read N- to C-terminus: 3-methyl-2-oxobutanoate hydroxymethyltransferase (260 aa).

The Mg(2+) site is built by Asp-42 and Asp-81. 3-methyl-2-oxobutanoate is bound by residues 42-43, Asp-81, and Lys-109; that span reads DS. Glu-111 contacts Mg(2+). The Proton acceptor role is filled by Glu-178.

It belongs to the PanB family. In terms of assembly, homodecamer; pentamer of dimers. Mg(2+) serves as cofactor.

The protein localises to the cytoplasm. The enzyme catalyses 3-methyl-2-oxobutanoate + (6R)-5,10-methylene-5,6,7,8-tetrahydrofolate + H2O = 2-dehydropantoate + (6S)-5,6,7,8-tetrahydrofolate. It participates in cofactor biosynthesis; (R)-pantothenate biosynthesis; (R)-pantoate from 3-methyl-2-oxobutanoate: step 1/2. In terms of biological role, catalyzes the reversible reaction in which hydroxymethyl group from 5,10-methylenetetrahydrofolate is transferred onto alpha-ketoisovalerate to form ketopantoate. This Ruthia magnifica subsp. Calyptogena magnifica protein is 3-methyl-2-oxobutanoate hydroxymethyltransferase.